The following is a 96-amino-acid chain: Co-chaperonin GroES (96 aa).

This sequence belongs to the GroES chaperonin family. Heptamer of 7 subunits arranged in a ring. Interacts with the chaperonin GroEL.

The protein resides in the cytoplasm. Its function is as follows. Together with the chaperonin GroEL, plays an essential role in assisting protein folding. The GroEL-GroES system forms a nano-cage that allows encapsulation of the non-native substrate proteins and provides a physical environment optimized to promote and accelerate protein folding. GroES binds to the apical surface of the GroEL ring, thereby capping the opening of the GroEL channel. This Acinetobacter baylyi (strain ATCC 33305 / BD413 / ADP1) protein is Co-chaperonin GroES.